Here is a 399-residue protein sequence, read N- to C-terminus: Adenylate cyclase (399 aa).

Polar residues predominate over residues 1-10; the sequence is MTVGDTTSGS. A disordered region spans residues 1-35; the sequence is MTVGDTTSGSGEEPAADSSVHATPHHEVDHTVEPT. The span at 24 to 33 shows a compositional bias: basic and acidic residues; it reads PHHEVDHTVE. A Guanylate cyclase domain is found at 198-307; sequence RVRFADLVGF…TTVNLASRLT (110 aa). Mg(2+) contacts are provided by aspartate 203 and aspartate 247.

The protein belongs to the adenylyl cyclase class-3 family. The cofactor is Mg(2+).

The enzyme catalyses ATP = 3',5'-cyclic AMP + diphosphate. The chain is Adenylate cyclase (cya) from Streptomyces griseus.